A 90-amino-acid polypeptide reads, in one-letter code: Small ribosomal subunit protein bS18 (90 aa).

The interval 1-23 is disordered; the sequence is MKPMRQKNTRAQGNKSISNALAS. Over residues 9–21 the composition is skewed to polar residues; that stretch reads TRAQGNKSISNAL.

The protein belongs to the bacterial ribosomal protein bS18 family. In terms of assembly, part of the 30S ribosomal subunit. Forms a tight heterodimer with protein bS6.

In terms of biological role, binds as a heterodimer with protein bS6 to the central domain of the 16S rRNA, where it helps stabilize the platform of the 30S subunit. The polypeptide is Small ribosomal subunit protein bS18 (Chlorobium luteolum (strain DSM 273 / BCRC 81028 / 2530) (Pelodictyon luteolum)).